The following is a 377-amino-acid chain: N-acetyldiaminopimelate deacetylase (377 aa).

Residue Asp-69 is part of the active site. Glu-128 functions as the Proton acceptor in the catalytic mechanism.

The protein belongs to the peptidase M20A family. N-acetyldiaminopimelate deacetylase subfamily.

It catalyses the reaction N-acetyl-(2S,6S)-2,6-diaminopimelate + H2O = (2S,6S)-2,6-diaminopimelate + acetate. It functions in the pathway amino-acid biosynthesis; L-lysine biosynthesis via DAP pathway; LL-2,6-diaminopimelate from (S)-tetrahydrodipicolinate (acetylase route): step 3/3. In terms of biological role, catalyzes the conversion of N-acetyl-diaminopimelate to diaminopimelate and acetate. The chain is N-acetyldiaminopimelate deacetylase from Brevibacillus brevis (strain 47 / JCM 6285 / NBRC 100599).